Consider the following 245-residue polypeptide: OVARIAN TUMOR DOMAIN-containing deubiquitinating enzyme 11 (245 aa).

The interval 1–37 (MDENHRNPFANASTSARASGSTSASSNSSFSSSVADT) is disordered. Over residues 10-35 (ANASTSARASGSTSASSNSSFSSSVA) the composition is skewed to low complexity. The region spanning 101-225 (LAELQMEGDG…EVHYNSLYAN (125 aa)) is the OTU domain. The active site involves aspartate 109. Cysteine 112 functions as the Nucleophile in the catalytic mechanism. Histidine 218 is a catalytic residue.

Belongs to the peptidase C85 family.

The enzyme catalyses Thiol-dependent hydrolysis of ester, thioester, amide, peptide and isopeptide bonds formed by the C-terminal Gly of ubiquitin (a 76-residue protein attached to proteins as an intracellular targeting signal).. Functionally, hydrolase that can remove conjugated ubiquitin from proteins in vitro and may therefore play an important regulatory role at the level of protein turnover by preventing degradation. Inactive cysteine protease. The protein is OVARIAN TUMOR DOMAIN-containing deubiquitinating enzyme 11 of Arabidopsis thaliana (Mouse-ear cress).